A 1489-amino-acid polypeptide reads, in one-letter code: Chromatin-remodeling ATPase INO80 (1489 aa).

Residues S65, S115, and S133 each carry the phosphoserine modification. Disordered regions lie at residues 137-311 (NEKD…KLSM) and 393-452 (KRER…GLPT). Acidic residues-rich tracts occupy residues 140-164 (DADE…EDEA) and 214-291 (DENE…DFNP). Over residues 301–311 (SSSSSSTKLSM) the composition is skewed to low complexity. The span at 393–402 (KREREREEAL) shows a compositional bias: basic and acidic residues. The 126-residue stretch at 476–601 (IWKDMARKDS…SHFIGRKIKT (126 aa)) folds into the DBINO domain. S610 is subject to Phosphoserine. The Helicase ATP-binding domain maps to 718 to 890 (ANLYDQGING…WALLHFIMPS (173 aa)). 731–738 (DEMGLGKT) contributes to the ATP binding site. The short motif at 841-844 (DEAQ) is the DEAQ box element. In terms of domain architecture, Helicase C-terminal spans 1303–1467 (KLDELLVKLK…TIEVGENDSE (165 aa)). Positions 1456–1489 (IKTIEVGENDSEVTREGSKSISQDGIKEAASALA) are disordered.

The protein belongs to the SNF2/RAD54 helicase family. Component of the chromatin-remodeling INO80 complex, at least composed of ARP4, ARP5, ARP8, RVB1, RVB2, TAF14, NHP10, IES1, IES3, IES4, IES6, ACT1, IES2, IES5 and INO80.

It localises to the nucleus. The enzyme catalyses ATP + H2O = ADP + phosphate + H(+). Its function is as follows. ATPase component of the INO80 complex which remodels chromatin by shifting nucleosomes and is involved in DNA repair. Its ability to induce transcription of some phosphate-responsive genes is modulated by inositol polyphosphates. The INO80 complex is involved in DNA repair by associating with 'Ser-129' phosphorylated H2A histones as a response to DNA damage. The protein is Chromatin-remodeling ATPase INO80 (INO80) of Saccharomyces cerevisiae (strain ATCC 204508 / S288c) (Baker's yeast).